The chain runs to 302 residues: Probable protein ABIL4 (302 aa).

2 disordered regions span residues 151 to 179 (PSTG…YPSA) and 220 to 256 (LLGK…QPGF). Residues 161–170 (ARLQTDNGQD) show a composition bias toward polar residues.

This sequence belongs to the ABI family. In terms of assembly, binds SCAR.

It localises to the cytoplasm. The protein localises to the cytoskeleton. Involved in regulation of actin and microtubule organization. Part of a WAVE complex that activates the Arp2/3 complex. The sequence is that of Probable protein ABIL4 from Oryza sativa subsp. japonica (Rice).